The following is a 538-amino-acid chain: Chaperonin GroEL (538 aa).

ATP-binding positions include 29-32, 86-90, G413, 476-478, and D492; these read TIGP, DGTTT, and NAA.

Belongs to the chaperonin (HSP60) family. As to quaternary structure, forms a cylinder of 14 subunits composed of two heptameric rings stacked back-to-back. Interacts with the co-chaperonin GroES.

The protein resides in the cytoplasm. It carries out the reaction ATP + H2O + a folded polypeptide = ADP + phosphate + an unfolded polypeptide.. Functionally, together with its co-chaperonin GroES, plays an essential role in assisting protein folding. The GroEL-GroES system forms a nano-cage that allows encapsulation of the non-native substrate proteins and provides a physical environment optimized to promote and accelerate protein folding. This chain is Chaperonin GroEL, found in Staphylococcus aureus (strain Mu3 / ATCC 700698).